Here is a 538-residue protein sequence, read N- to C-terminus: RNA-binding protein Ro60 (538 aa).

An N-acetylmethionine modification is found at M1. Phosphoserine occurs at positions 4 and 19. The TROVE domain occupies 16 to 369 (VVNSEGGCVW…TFKTVEPTGK (354 aa)). An RNA-binding region spans residues 120 to 284 (RIPTHLFTFI…EMPLTALLRN (165 aa)). Position 224 is an N6-acetyllysine (K224). The VWFA-like domain stretch occupies residues 361 to 538 (FKTVEPTGKR…VIRNFTLDVI (178 aa)). A divalent metal cation contacts are provided by S378, S380, and T445.

It belongs to the Ro 60 kDa family. In terms of assembly, identified in a IGF2BP1-dependent mRNP granule complex containing untranslated mRNAs. Found in a complex with PUF60 and Y5 RNA. Interacts with RAB11FIP5. In terms of tissue distribution, highest in brain, followed by lung, muscle, kidney and heart. Lower levels are found in testis, liver and spleen.

Its subcellular location is the cytoplasm. In terms of biological role, RNA-binding protein that binds to misfolded non-coding RNAs, pre-5S rRNA, and several small cytoplasmic RNA molecules known as Y RNAs. May play roles in cilia formation and/or maintenance. The chain is RNA-binding protein Ro60 from Mus musculus (Mouse).